A 488-amino-acid chain; its full sequence is UDP-N-acetylmuramate--L-alanine ligase (488 aa).

127–133 (GTHGKTT) contacts ATP.

It belongs to the MurCDEF family.

The protein resides in the cytoplasm. The enzyme catalyses UDP-N-acetyl-alpha-D-muramate + L-alanine + ATP = UDP-N-acetyl-alpha-D-muramoyl-L-alanine + ADP + phosphate + H(+). The protein operates within cell wall biogenesis; peptidoglycan biosynthesis. Its function is as follows. Cell wall formation. The polypeptide is UDP-N-acetylmuramate--L-alanine ligase (Shewanella sp. (strain ANA-3)).